We begin with the raw amino-acid sequence, 164 residues long: Putative deoxyuridine 5'-triphosphate nucleotidohydrolase (164 aa).

A substrate-binding site is contributed by 65 to 67; it reads RSG. An N6-acetyllysine; by host modification is found at Lys71. Residues 79-82, Gly90, and 138-139 contribute to the substrate site; these read GVVD and YG.

It belongs to the dUTPase family. Requires Mg(2+) as cofactor.

It carries out the reaction dUTP + H2O = dUMP + diphosphate + H(+). Its function is as follows. This enzyme is involved in nucleotide metabolism: it produces dUMP, the immediate precursor of thymidine nucleotides and it decreases the intracellular concentration of dUTP so that uracil cannot be incorporated into DNA. In Dryophytes versicolor (chameleon treefrog), this protein is Putative deoxyuridine 5'-triphosphate nucleotidohydrolase.